The following is a 276-amino-acid chain: MGIIDVQRSHLTATPSKERDAPAHPPPTILPVCILFPYTSIALPVLMYYIPEKGQFDQNPFLKLIAILPPCLYSAVQFPLLFLGNPESSCTPRPALYATLYLLLDASLLAFSAISILSIAAFTTTEWNSDEVVAVCSTLLPSLLVLPAHLLSTSCALTPGSIGFTDSSVDILIDLLMVSLLAAGLTLNVDESWRFFPYICISSLVLVLAKLLRKSSSMPRRDPAPAPAWRIAAFVLIFGLSMFVYFSILYECLLIFGNHFPWFPSQAPSNDLTNKW.

The interval 1 to 24 (MGIIDVQRSHLTATPSKERDAPAH) is disordered.

Belongs to the UPF0328 family.

This is UPF0328 protein ECU01_0090/ECU01_1520/ECU02_1550/ECU08_0020 from Encephalitozoon cuniculi (strain GB-M1) (Microsporidian parasite).